We begin with the raw amino-acid sequence, 553 residues long: Cytokine-like nuclear factor N-PAC (553 aa).

Residues 8–66 enclose the PWWP domain; sequence LGDLVWGKLGRYPPWPGKIVNPPKDLKKPRGKKCFFVKFFGTEDHAWIKVEQLKPYHLH. Composition is skewed to basic and acidic residues over residues 92–145 and 162–182; these read KTKG…EGKK and RAQD…KDLT. Residues 92–188 are disordered; it reads KTKGKDQASS…KDLTIPESST (97 aa). Positions 168-180 form a DNA-binding region, a.T hook; that stretch reads PRKRGRPPKDEKD. The interaction with histone H3 stretch occupies residues 214 to 217; it reads DPHF. Residues 261 to 553 form a dehydrogenase domain region; the sequence is GSITPTDKKI…MSAVYRAYIH (293 aa). NAD(+) is bound by residues 271-285, T362, and K505; that span reads GFLG…IVSN.

It belongs to the HIBADH-related family. NP60 subfamily. Homotetramere. Binds to mononucleosomes.

It is found in the nucleus. The protein resides in the chromosome. Its function is as follows. Cytokine-like nuclear factor with chromatin gene reader activity involved in chromatin modification and regulation of gene expression. Acts as a nucleosome-destabilizing factor that is recruited to genes during transcriptional activation. Recognizes and binds histone H3 without a preference for specific epigenetic markers and also binds DNA. Interacts with KDM1B and promotes its histone demethylase activity by facilitating the capture of H3 tails, they form a multifunctional enzyme complex that modifies transcribed chromatin and facilitates Pol II transcription through nucleosomes. The chain is Cytokine-like nuclear factor N-PAC (GLYR1) from Gallus gallus (Chicken).